The primary structure comprises 1380 residues: MKAPAALAPGILVLLLTLVQKGGGECREALAKSEMNVNMRYRLPNFTADTPIQNVVVHEGHVFLGAINSIYVLRERDLQQVSEYKTGPVWEHPDCLPCQACGLAGGQWRENVNMALLVETYYDDQLISCGSVHRGTCQRHVLPRDNPADIQAEVHCMHSPRADEDEASQCPDCVVSALGTKVLLAEKQRFVNFFVGNTLNGSSLPGHALHSISVRRIKETQDGFKFLTDKSYIDVLPEFQASYPIKYIHAFESNRFIYFLTVQRETLDSPSFHTRIIRFCSADSGLRSYMEMPLECILTEKRRKRALRSEVFNVLQAAYVGKPGAQLAKQIGASAHDDILYGVFSQSRPDSAEPTDRSALCAFPVKYVDEFFHRIVNKNNVRCLQHFYGPNHLHCFNRTLLRNSSGCEVRSDEYRTEFTTALQRIDLSAGHFSQVLLTSISTFIKGDLTIANLGTSEGRFMQVVVSRSGSWTPHVDFRLDSHAVSPEVIVEHPVNQNGYTLVVTGKKITKIPLDGLGCEHFQSCSQCLSAPPFVQCGWCHDKCARAEDCPNGTWTQEICLPTIYEVFPASAPLEGGTTLTVCGWDFGFRRNNKSDFKRTRVLIGNESCPLTLSESTPNMLKCTVGPAMSEHSNLSIIISNVRGTAPQYRTFSYVDPEITSISPSYGPKAGGTLVTLTGKYLNSGNSRHISIGGKTCTLKSVSDSVLECYTPAQSISADFPVKLKIDLANREAYSFSYQENPLVVEIHPTKSFVSGGSTITVVGKNLNSVSVPRMIINVHEVEMNFTVACQQRSNSELICCTTPSLQQLDLQLPLKATAFFMLDGIHSRDFDLIYVPNPVFKLFEKPVMISMGNENVLEIKGNDIDPEAVKGEVLKVGNKSCENIHSYPESVLCTVPNDLLKLNSELNIEWKQAVSSTVLGKVIVQPDQNFTGLIVGVVSISVILLSSLGLFLWLKKRKQIKDLGSELVCYDARVHTPHLDRLVSARSVSPTTEMVSNESVDYRATFPEDQFPNSSQNGSCRQVQYPLPDLSPILTSGDSDISSPLLQNTVHIDLSALNPELVQAVQHVVIGPSSLIVHFNEVIGRGHFGCVYHGTLLDNDDRKIHCAVKSLNRITDIGEVSQFLTEGIIMKDFSHPNVLSLLGICLRSEGSPLVVLPYMKHGDLRNFIRNETHSPTVKDLIGFGLQVAKGMKYLASKKFVHRDLAARNCMLDGKFTVKVADFGLARDMYDKEYYSVHNKTGAKLPVKWMALESLQTQKFTTKSDVWSFGVLLWELMTRGAPPYPDVNTFDITVYLLQGRRLLQPEYCPDPLYEVMLKCWHPKAEMRPSFTELVSRISAIFSTFIGEHYVHVNATYVNVKCVAPYPSLLSSHDTVDGEVDT.

The N-terminal stretch at 1 to 24 is a signal peptide; that stretch reads MKAPAALAPGILVLLLTLVQKGGG. Residues 25–931 lie on the Extracellular side of the membrane; that stretch reads ECREALAKSE…VIVQPDQNFT (907 aa). One can recognise a Sema domain in the interval 27 to 513; the sequence is REALAKSEMN…TGKKITKIPL (487 aa). A glycan (N-linked (GlcNAc...) asparagine) is linked at Asn45. 4 disulfide bridges follow: Cys95–Cys101, Cys98–Cys156, Cys129–Cys137, and Cys170–Cys173. N-linked (GlcNAc...) asparagine glycosylation is present at Asn200. Disulfide bonds link Cys296–Cys361 and Cys383–Cys395. N-linked (GlcNAc...) asparagine glycans are attached at residues Asn397 and Asn403. 4 disulfide bridges follow: Cys518–Cys536, Cys524–Cys559, Cys527–Cys543, and Cys539–Cys549. N-linked (GlcNAc...) asparagine glycosylation is present at Asn551. 3 consecutive IPT/TIG domains span residues 561–654, 656–738, and 741–835; these read PTIY…FSYV, PEIT…FSYQ, and PLVV…LIYV. Thr580 carries O-linked (Man) threonine glycosylation. N-linked (GlcNAc...) asparagine glycosylation is found at Asn592, Asn605, and Asn633. O-linked (Man) threonine glycans are attached at residues Thr675 and Thr760. 3 N-linked (GlcNAc...) asparagine glycosylation sites follow: Asn784, Asn878, and Asn929. A helical membrane pass occupies residues 932–954; the sequence is GLIVGVVSISVILLSSLGLFLWL. Over 955-1380 the chain is Cytoplasmic; that stretch reads KKRKQIKDLG…HDTVDGEVDT (426 aa). At Ser965 the chain carries Phosphoserine. Thr976 carries the post-translational modification Phosphothreonine. Residues Ser989, Ser996, and Ser999 each carry the phosphoserine modification. Tyr1002 carries the post-translational modification Phosphotyrosine. In terms of domain architecture, Protein kinase spans 1077-1344; sequence VHFNEVIGRG…RISAIFSTFI (268 aa). Residues 1083-1091 and Lys1109 each bind ATP; that span reads IGRGHFGCV. Asp1203 (proton acceptor) is an active-site residue. The tract at residues 1211-1380 is interaction with RANBP9; it reads LDGKFTVKVA…HDTVDGEVDT (170 aa). The residue at position 1229 (Tyr1229) is a Phosphotyrosine. 2 positions are modified to phosphotyrosine; by autocatalysis: Tyr1233 and Tyr1234. Thr1288 carries the phosphothreonine modification. An interaction with MUC20 region spans residues 1319-1358; that stretch reads WHPKAEMRPSFTELVSRISAIFSTFIGEHYVHVNATYVNV. Phosphotyrosine; by autocatalysis is present on residues Tyr1348 and Tyr1355. Tyr1364 is modified (phosphotyrosine).

This sequence belongs to the protein kinase superfamily. Tyr protein kinase family. Heterodimer made of an alpha chain (50 kDa) and a beta chain (145 kDa) which are disulfide linked. Binds PLXNB1. Interacts when phosphorylated with downstream effectors including STAT3, PIK3R1, SRC, PCLG1, GRB2 and GAB1. Interacts with SPSB1, SPSB2 and SPSB4. Interacts with INPP5D/SHIP1. When phosphorylated at Tyr-1355, interacts with INPPL1/SHIP2. Interacts with RANBP9 and RANBP10, as well as SPSB1, SPSB2, SPSB3 and SPSB4. SPSB1 binding occurs in the presence and in the absence of HGF, however HGF treatment has a positive effect on this interaction. Interacts with MUC20; prevents interaction with GRB2 and suppresses hepatocyte growth factor-induced cell proliferation. Interacts with GRB10. Interacts with PTPN1 and PTPN2. Interacts with HSP90AA1 and HSP90AB1; the interaction suppresses MET kinase activity. Interacts with tensin TNS3. Interacts (when phosphorylated) with tensin TNS4 (via SH2 domain); the interaction increases MET protein stability by inhibiting MET endocytosis and subsequent lysosomal degradation. Autophosphorylated in response to ligand binding on Tyr-1233 and Tyr-1234 in the kinase domain leading to further phosphorylation of Tyr-1348 and Tyr-1355 in the C-terminal multifunctional docking site. Dephosphorylated by PTPRJ at Tyr-1348 and Tyr-1364. Dephosphorylated by PTPN1 and PTPN2. Post-translationally, ubiquitinated. Ubiquitination by CBL regulates the receptor stability and activity through proteasomal degradation. In terms of processing, O-mannosylation of IPT/TIG domains by TMEM260 is required for protein maturation. O-mannosylated residues are composed of single mannose glycans that are not elongated or modified.

The protein resides in the membrane. It carries out the reaction L-tyrosyl-[protein] + ATP = O-phospho-L-tyrosyl-[protein] + ADP + H(+). In its inactive state, the C-terminal tail interacts with the catalytic domain and inhibits the kinase activity. Upon ligand binding, the C-terminal tail is displaced and becomes phosphorylated, thus increasing the kinase activity. Functionally, receptor tyrosine kinase that transduces signals from the extracellular matrix into the cytoplasm by binding to hepatocyte growth factor/HGF ligand. Regulates many physiological processes including proliferation, scattering, morphogenesis and survival. Ligand binding at the cell surface induces autophosphorylation of MET on its intracellular domain that provides docking sites for downstream signaling molecules. Following activation by ligand, interacts with the PI3-kinase subunit PIK3R1, PLCG1, SRC, GRB2, STAT3 or the adapter GAB1. Recruitment of these downstream effectors by MET leads to the activation of several signaling cascades including the RAS-ERK, PI3 kinase-AKT, or PLCgamma-PKC. The RAS-ERK activation is associated with the morphogenetic effects while PI3K/AKT coordinates prosurvival effects. During embryonic development, MET signaling plays a role in gastrulation, development and migration of muscles and neuronal precursors, angiogenesis and kidney formation. In adults, participates in wound healing as well as organ regeneration and tissue remodeling. Also promotes differentiation and proliferation of hematopoietic cells. The chain is Hepatocyte growth factor receptor (MET) from Echinops telfairi (Lesser hedgehog tenrec).